The chain runs to 144 residues: PE family protein PE9 (144 aa).

The region spanning 1–87 is the PE domain; the sequence is MSYMIATPAA…RTLTGGCGVF (87 aa). Residues 98–124 form a disordered region; it reads AAEHRAAGAGRRQRRRRSGDGQWRLRQ.

It belongs to the mycobacterial PE family. Forms a complex with PE10. The complex interacts with human TLR4.

Its subcellular location is the secreted. The protein localises to the cell wall. The protein resides in the cell surface. In terms of biological role, together with PE10, induces macrophage apoptosis through human Toll-like receptor 4 (TLR4) signaling pathway. Interaction with TLR4 leads to increased levels of phospho-IRF-3, increase in the transcript levels of IFN-beta and pro-apoptotic genes, up-regulation of IL-10, down-regulation of IL-1b and enhanced levels of macrophage apoptosis. This Mycobacterium tuberculosis (strain ATCC 25618 / H37Rv) protein is PE family protein PE9.